A 377-amino-acid polypeptide reads, in one-letter code: Leukocyte elastase inhibitor (377 aa).

M1 bears the N-acetylmethionine mark.

This sequence belongs to the serpin family. Ov-serpin subfamily.

It localises to the cytoplasm. In terms of biological role, regulates the activity of the neutrophil proteases. The polypeptide is Leukocyte elastase inhibitor (serpinb1) (Xenopus tropicalis (Western clawed frog)).